We begin with the raw amino-acid sequence, 184 residues long: UPF0149 protein Avin_47340 (184 aa).

This sequence belongs to the UPF0149 family.

This is UPF0149 protein Avin_47340 from Azotobacter vinelandii (strain DJ / ATCC BAA-1303).